We begin with the raw amino-acid sequence, 145 residues long: Deoxyuridine 5'-triphosphate nucleotidohydrolase (145 aa).

Substrate-binding positions include 65 to 67 (RSG), asparagine 78, 82 to 84 (TID), and methionine 92.

The protein belongs to the dUTPase family. It depends on Mg(2+) as a cofactor.

The catalysed reaction is dUTP + H2O = dUMP + diphosphate + H(+). The protein operates within pyrimidine metabolism; dUMP biosynthesis; dUMP from dCTP (dUTP route): step 2/2. This enzyme is involved in nucleotide metabolism: it produces dUMP, the immediate precursor of thymidine nucleotides and it decreases the intracellular concentration of dUTP so that uracil cannot be incorporated into DNA. The polypeptide is Deoxyuridine 5'-triphosphate nucleotidohydrolase (Chlorobium phaeobacteroides (strain BS1)).